The following is an 867-amino-acid chain: MKPYVLKFQEIRPHSEALVGGKGMNLGACSNIEGVHVPAGFCLTTEAYKRTLAENNEFTQLLQRLSSLKTSDMDAIREISETIRTLIQHTQIPSEIASYMDATLLDVGGYEMPFAVRSSATAEDLPHASFAGQHDTYLNIIGKDALLQHISMCWASLFTERAIIYRIQNQFDHRKVQLAVVIQQMISPEASGILFTADPITSNRKSLSIDASFGLGEALVSGLVSADSYTVRENTITNKIIATKKLAIYSLKEGGTETRILEKSQQTKQTLTDQQIIQLAKLGRKIEAYFGKPQDIEWCLAEGAFYIVQSRPITTLYPIPEVNEPGNRVYISVAHQQMMTDAMKPLGLSFYLMTTPATMYTAGGRLFVDITQSLSAKVSRDMMVNSLGQSDPLIKDALLTVINKKGFLPPLPTEENPSHATVSGKPPVRSIPDSSSVFELVRNSENSIKHLKQSIETKSGSDLFDFIVEDLEELKRVLFNPTSIDAIMAGMDASAWLNEHIYQWLGEKNVADKLSESAPNNITSQMGLELLDVADVIRPYPAVRAYLEQTKNPDFMNELATLEGGAETKKALEDYLQKYGMRCAGEIDLTKTRWIENPLTLIPLILSNIKNFDSGASMHKFAQGEKEAFHKEQEILRRLQELPDGEQKAMETKEKIDILRHFIGYREYPKYGMINRYFIYKLALLRAGEQLVKDGILQEQEDIYFLYFEELREVVRTGQVDYELINVRKRDFATFEKLTPPRILTSDGEMINGEYKRENLPKDAILGLPVSSGTVEGRARVILDMEKADLEDGDILVTAYTDPSWTPAFVSIKGLVTEVGGLMTHGAVIAREYGLPAVVGVENATTIIKDGQQIRINGTEGYIEILD.

The segment at 1-314 (MKPYVLKFQE…FYIVQSRPIT (314 aa)) is ATP-binding. Residues Lys-22, Arg-117, Gly-132, Thr-136, Gln-183, Glu-297, Gln-309, and Arg-311 each contribute to the ATP site. The tract at residues 327–754 (NRVYISVAHQ…TSDGEMINGE (428 aa)) is rifampicin-binding. Positions 336 and 351 each coordinate rifampicin. A swivel phosphohistidine region spans residues 767 to 865 (GLPVSSGTVE…INGTEGYIEI (99 aa)). His-825 serves as the catalytic Tele-phosphohistidine intermediate.

This sequence belongs to the rifampicin phosphotransferase family.

It catalyses the reaction rifampicin + ATP + H2O = 21-phosphorifampicin + AMP + phosphate + 2 H(+). Functionally, catalyzes the phosphorylation of rifampicin, also known as rifampin (RIF), leading to its inactivation. Confers high level resistance to a variety of clinically used rifamycin antibiotics. Does not show phosphoenolpyruvate (PEP) synthase activity. The chain is Rifampicin phosphotransferase from Listeria monocytogenes serotype 4b (strain F2365).